The primary structure comprises 360 residues: Phospho-N-acetylmuramoyl-pentapeptide-transferase (360 aa).

A run of 10 helical transmembrane segments spans residues 27–47 (GATA…IAAL), 74–94 (TMGG…WANL), 99–119 (VWVV…DDYL), 135–155 (LLLE…LGTP), 165–185 (INGF…FVIV), 199–219 (GLAI…AYLA), 236–256 (AGEL…FLWF), 263–283 (IFMG…VAVA), 288–308 (IVLA…IVQV), and 337–357 (QVVV…LSTL).

Belongs to the glycosyltransferase 4 family. MraY subfamily. Mg(2+) serves as cofactor.

The protein localises to the cell inner membrane. It carries out the reaction UDP-N-acetyl-alpha-D-muramoyl-L-alanyl-gamma-D-glutamyl-meso-2,6-diaminopimeloyl-D-alanyl-D-alanine + di-trans,octa-cis-undecaprenyl phosphate = di-trans,octa-cis-undecaprenyl diphospho-N-acetyl-alpha-D-muramoyl-L-alanyl-D-glutamyl-meso-2,6-diaminopimeloyl-D-alanyl-D-alanine + UMP. It functions in the pathway cell wall biogenesis; peptidoglycan biosynthesis. Its function is as follows. Catalyzes the initial step of the lipid cycle reactions in the biosynthesis of the cell wall peptidoglycan: transfers peptidoglycan precursor phospho-MurNAc-pentapeptide from UDP-MurNAc-pentapeptide onto the lipid carrier undecaprenyl phosphate, yielding undecaprenyl-pyrophosphoryl-MurNAc-pentapeptide, known as lipid I. The chain is Phospho-N-acetylmuramoyl-pentapeptide-transferase from Methylocella silvestris (strain DSM 15510 / CIP 108128 / LMG 27833 / NCIMB 13906 / BL2).